The sequence spans 221 residues: Large ribosomal subunit protein uL16x (221 aa).

The protein belongs to the universal ribosomal protein uL16 family. Component of the small ribosomal subunit. Mature ribosomes consist of a small (40S) and a large (60S) subunit. The 40S subunit contains about 33 different proteins and 1 molecule of RNA (18S). The 60S subunit contains about 49 different proteins and 3 molecules of RNA (25S, 5.8S and 5S).

In Arabidopsis thaliana (Mouse-ear cress), this protein is Large ribosomal subunit protein uL16x (RPL10C).